The sequence spans 545 residues: Glucans biosynthesis protein G (545 aa).

Positions 1-34 are cleaved as a signal peptide; the sequence is MVSLLRCQSFKPSSSLICSLALSAAFALSSSAFA. The tract at residues 38–60 is disordered; the sequence is KPAENKPATPVVSPPKATAQPAN.

The protein belongs to the OpgD/OpgG family.

It localises to the periplasm. It functions in the pathway glycan metabolism; osmoregulated periplasmic glucan (OPG) biosynthesis. Functionally, involved in the biosynthesis of osmoregulated periplasmic glucans (OPGs). The protein is Glucans biosynthesis protein G of Shewanella sp. (strain MR-4).